The following is a 580-amino-acid chain: Phosphatase and actin regulator 1 (580 aa).

Phosphoserine occurs at positions 67 and 78. Phosphothreonine is present on threonine 104. Positions 108–129 (RRRSKFANLGRIFKPWKWRKKK) match the Nuclear localization signal motif. One copy of the RPEL 1 repeat lies at 138-163 (AALERKISMRQSREELIKRGVLKEIY). Disordered stretches follow at residues 330 to 350 (SEQRVPCSTSYHSSGLHSSDG) and 374 to 408 (DNKENVPHEPDYEDSPCLYGREEEEEEEDEDDDAS). The span at 337–348 (STSYHSSGLHSS) shows a compositional bias: low complexity. Positions 374 to 383 (DNKENVPHEP) are enriched in basic and acidic residues. Acidic residues predominate over residues 395–407 (EEEEEEEDEDDDA). RPEL repeat units follow at residues 422-447 (DSLAIKLSNRPSKRELEEKNILPRQT), 460-485 (TKLTRRLSQRPTAEELEQRNILKPRN), and 498-523 (RRLTRKLSQRPTVEELRERKILIRFS). Residues 463-494 (TRRLSQRPTAEELEQRNILKPRNEQEEQEEKR) form a disordered region. Position 467 is a phosphoserine (serine 467). Residues 471-494 (TAEELEQRNILKPRNEQEEQEEKR) are compositionally biased toward basic and acidic residues. A Phosphoserine modification is found at serine 505.

This sequence belongs to the phosphatase and actin regulator family. In terms of assembly, interacts (via RPEL repeats) with ACTA1 and PPP1CA; ACTA1 and PPP1CA compete for the same binding site.

The protein localises to the cytoplasm. It is found in the synapse. It localises to the nucleus. Functionally, binds actin monomers (G actin) and plays a role in multiple processes including the regulation of actin cytoskeleton dynamics, actin stress fibers formation, cell motility and survival, formation of tubules by endothelial cells, and regulation of PPP1CA activity. Involved in the regulation of cortical neuron migration and dendrite arborization. In Mus musculus (Mouse), this protein is Phosphatase and actin regulator 1 (Phactr1).